The primary structure comprises 375 residues: Alanine racemase (375 aa).

Catalysis depends on Lys-38, which acts as the Proton acceptor; specific for D-alanine. Lys-38 is subject to N6-(pyridoxal phosphate)lysine. Arg-137 serves as a coordination point for substrate. The active-site Proton acceptor; specific for L-alanine is Tyr-266. Residue Met-314 participates in substrate binding.

This sequence belongs to the alanine racemase family. It depends on pyridoxal 5'-phosphate as a cofactor.

It carries out the reaction L-alanine = D-alanine. Its pathway is amino-acid biosynthesis; D-alanine biosynthesis; D-alanine from L-alanine: step 1/1. In terms of biological role, catalyzes the interconversion of L-alanine and D-alanine. May also act on other amino acids. This is Alanine racemase (alr) from Cutibacterium acnes (strain DSM 16379 / KPA171202) (Propionibacterium acnes).